Consider the following 108-residue polypeptide: UPF0145 protein LCA_1282 (108 aa).

Belongs to the UPF0145 family.

In Latilactobacillus sakei subsp. sakei (strain 23K) (Lactobacillus sakei subsp. sakei), this protein is UPF0145 protein LCA_1282.